Here is a 203-residue protein sequence, read N- to C-terminus: Na(+)-translocating NADH-quinone reductase subunit E (203 aa).

A run of 6 helical transmembrane segments spans residues 11–31, 35–55, 82–102, 115–135, 145–165, and 181–201; these read SIFI…FLAV, ISTA…TVPL, FLGL…LEMF, GIFL…LFMV, MVYG…MAGV, and LGIT…FSGI.

Belongs to the NqrDE/RnfAE family. In terms of assembly, composed of six subunits; NqrA, NqrB, NqrC, NqrD, NqrE and NqrF.

Its subcellular location is the cell inner membrane. The catalysed reaction is a ubiquinone + n Na(+)(in) + NADH + H(+) = a ubiquinol + n Na(+)(out) + NAD(+). Its function is as follows. NQR complex catalyzes the reduction of ubiquinone-1 to ubiquinol by two successive reactions, coupled with the transport of Na(+) ions from the cytoplasm to the periplasm. NqrA to NqrE are probably involved in the second step, the conversion of ubisemiquinone to ubiquinol. This Dichelobacter nodosus (strain VCS1703A) protein is Na(+)-translocating NADH-quinone reductase subunit E.